Here is a 618-residue protein sequence, read N- to C-terminus: Membrane protein insertase YidC (618 aa).

A run of 6 helical transmembrane segments spans residues 3 to 23, 363 to 383, 439 to 459, 478 to 498, 520 to 540, and 545 to 565; these read KNTI…SFLS, WGLS…IVVF, LPML…PSAI, FITF…FCLL, PQMA…LFVL, and SGLN…MIIL.

This sequence belongs to the OXA1/ALB3/YidC family. Type 1 subfamily. Interacts with the Sec translocase complex via SecD. Specifically interacts with transmembrane segments of nascent integral membrane proteins during membrane integration.

Its subcellular location is the cell inner membrane. Its function is as follows. Required for the insertion and/or proper folding and/or complex formation of integral membrane proteins into the membrane. Involved in integration of membrane proteins that insert both dependently and independently of the Sec translocase complex, as well as at least some lipoproteins. Aids folding of multispanning membrane proteins. The chain is Membrane protein insertase YidC from Bacteroides fragilis (strain ATCC 25285 / DSM 2151 / CCUG 4856 / JCM 11019 / LMG 10263 / NCTC 9343 / Onslow / VPI 2553 / EN-2).